Here is a 430-residue protein sequence, read N- to C-terminus: Phosphoribosylamine--glycine ligase (430 aa).

In terms of domain architecture, ATP-grasp spans 109–316; sequence KDFMARHGIP…LLDLIEAALN (208 aa). An ATP-binding site is contributed by 135–196; it reads VRQQGAPIVI…EEYLDGEEAS (62 aa). Mg(2+) contacts are provided by Glu286 and Asn288.

Belongs to the GARS family. Mg(2+) is required as a cofactor. Requires Mn(2+) as cofactor.

The catalysed reaction is 5-phospho-beta-D-ribosylamine + glycine + ATP = N(1)-(5-phospho-beta-D-ribosyl)glycinamide + ADP + phosphate + H(+). The protein operates within purine metabolism; IMP biosynthesis via de novo pathway; N(1)-(5-phospho-D-ribosyl)glycinamide from 5-phospho-alpha-D-ribose 1-diphosphate: step 2/2. This is Phosphoribosylamine--glycine ligase from Xylella fastidiosa (strain Temecula1 / ATCC 700964).